Reading from the N-terminus, the 268-residue chain is Zinc transporter ZupT (268 aa).

8 consecutive transmembrane segments (helical) span residues 5 to 25 (ILFA…GSLI), 36 to 56 (VLTI…MIEI), 75 to 95 (VVTV…DKLI), 124 to 144 (MGLF…LATF), 157 to 177 (IAVA…APIF), 187 to 207 (FILS…GYFL), 211 to 231 (FFSP…MVYI), and 248 to 268 (FAIG…LLFT). The Fe(2+) site is built by Asn136 and Glu139. Positions 139 and 164 each coordinate Zn(2+). Fe(2+) contacts are provided by Asn165, Glu168, and Glu197. Glu168 serves as a coordination point for Zn(2+).

It belongs to the ZIP transporter (TC 2.A.5) family. ZupT subfamily.

The protein resides in the cell membrane. The enzyme catalyses Zn(2+)(in) = Zn(2+)(out). Functionally, mediates zinc uptake. May also transport other divalent cations. The sequence is that of Zinc transporter ZupT from Chlorobium chlorochromatii (strain CaD3).